We begin with the raw amino-acid sequence, 589 residues long: NADP-dependent malic enzyme (589 aa).

Y137 functions as the Proton donor in the catalytic mechanism. R190 contributes to the NAD(+) binding site. K208 functions as the Proton acceptor in the catalytic mechanism. Residues E280, D281, and D304 each contribute to the a divalent metal cation site. D304 contributes to the NAD(+) binding site. 333-349 contacts NADP(+); it reads LFLGAGEAGTGIAELIA. N445 contributes to the NAD(+) binding site.

The protein belongs to the malic enzymes family. Homotetramer. Mg(2+) serves as cofactor. Mn(2+) is required as a cofactor.

Its subcellular location is the cytoplasm. It catalyses the reaction (S)-malate + NADP(+) = pyruvate + CO2 + NADPH. The catalysed reaction is oxaloacetate + H(+) = pyruvate + CO2. This chain is NADP-dependent malic enzyme (ME1), found in Phaseolus vulgaris (Kidney bean).